Reading from the N-terminus, the 614-residue chain is DBH-like monooxygenase protein 1 (614 aa).

A signal peptide spans Met-1–Ala-22. The Lumenal portion of the chain corresponds to Arg-23–Ser-592. The 114-residue stretch at Ala-35 to His-148 folds into the DOMON domain. Asn-114 is a glycosylation site (N-linked (GlcNAc...) asparagine). Residue Tyr-203 is part of the active site. 2 cysteine pairs are disulfide-bonded: Cys-205–Cys-257 and Cys-242–Cys-269. Residues His-235 and His-236 each coordinate Cu cation. An N-linked (GlcNAc...) asparagine glycan is attached at Asn-247. Cu cation contacts are provided by His-307, His-389, His-391, and Met-464. 3 disulfide bridges follow: Cys-364/Cys-480, Cys-368/Cys-550, and Cys-443/Cys-465. Residue His-389 is part of the active site. Residues Asn-476 and Asn-517 are each glycosylated (N-linked (GlcNAc...) asparagine). Residues Leu-593–Val-613 form a helical membrane-spanning segment.

This sequence belongs to the copper type II ascorbate-dependent monooxygenase family. Cu(2+) is required as a cofactor.

The protein localises to the endoplasmic reticulum membrane. The polypeptide is DBH-like monooxygenase protein 1 (MOXD1) (Gallus gallus (Chicken)).